A 100-amino-acid polypeptide reads, in one-letter code: Urease subunit gamma (100 aa).

It belongs to the urease gamma subunit family. In terms of assembly, heterotrimer of UreA (gamma), UreB (beta) and UreC (alpha) subunits. Three heterotrimers associate to form the active enzyme.

Its subcellular location is the cytoplasm. It catalyses the reaction urea + 2 H2O + H(+) = hydrogencarbonate + 2 NH4(+). It functions in the pathway nitrogen metabolism; urea degradation; CO(2) and NH(3) from urea (urease route): step 1/1. The polypeptide is Urease subunit gamma (Streptomyces avermitilis (strain ATCC 31267 / DSM 46492 / JCM 5070 / NBRC 14893 / NCIMB 12804 / NRRL 8165 / MA-4680)).